Consider the following 447-residue polypeptide: MREIVHLQTGQCGNQIGAAFWQTISGEHGLDSNGVYNGSSELQLERMSVYFNEASGNKYVPRAVLVDLEPGTMDAVRAGPFGQLFRPDNFVFGQSGAGNNWAKGHYTEGAELVDNVLDVVRREAEGCDCLQGFQITHSLGGGTGAGMGTLLISKIREEFPDRMMATFSVVPSPKVSDTVVEPYNATLSVHQLVEHSDETFCIDNEALYDICMRTLKLSNPSYGDLNYLVSAVMSGVTTCLRFPGQLNSDLRKLAVNMVPFPRLHFFMVGFAPLTSRGAHSFRAVSVPELTQQMFDPKNMMAASDFRNGRYLTCSAIFRGKVAMKEVEDQMRNVQSKNSSYFVEWIPNNIQTALCAIPPRGLKMSSTFIGNSTSIQELFKRVGDQFTAMFRRKAFLHWYTGEGMDEMEFTEAESNMNDLVSEYQQYQDAGIDEEEEEYEEELPLEGEE.

Residues Q11, E69, S138, G142, T143, G144, N204, and N226 each coordinate GTP. A Mg(2+)-binding site is contributed by E69. The segment at 427-447 (DAGIDEEEEEYEEELPLEGEE) is disordered. Acidic residues predominate over residues 429-447 (GIDEEEEEYEEELPLEGEE).

This sequence belongs to the tubulin family. As to quaternary structure, dimer of alpha and beta chains. A typical microtubule is a hollow water-filled tube with an outer diameter of 25 nm and an inner diameter of 15 nM. Alpha-beta heterodimers associate head-to-tail to form protofilaments running lengthwise along the microtubule wall with the beta-tubulin subunit facing the microtubule plus end conferring a structural polarity. Microtubules usually have 13 protofilaments but different protofilament numbers can be found in some organisms and specialized cells. Mg(2+) serves as cofactor.

Its subcellular location is the cytoplasm. It localises to the cytoskeleton. In terms of biological role, tubulin is the major constituent of microtubules, a cylinder consisting of laterally associated linear protofilaments composed of alpha- and beta-tubulin heterodimers. Microtubules grow by the addition of GTP-tubulin dimers to the microtubule end, where a stabilizing cap forms. Below the cap, tubulin dimers are in GDP-bound state, owing to GTPase activity of alpha-tubulin. This chain is Tubulin beta chain (TUB2), found in Hapsidospora chrysogena (Acremonium chrysogenum).